A 249-amino-acid chain; its full sequence is 3-deoxy-manno-octulosonate cytidylyltransferase (249 aa).

The protein belongs to the KdsB family.

The protein resides in the cytoplasm. The catalysed reaction is 3-deoxy-alpha-D-manno-oct-2-ulosonate + CTP = CMP-3-deoxy-beta-D-manno-octulosonate + diphosphate. Its pathway is nucleotide-sugar biosynthesis; CMP-3-deoxy-D-manno-octulosonate biosynthesis; CMP-3-deoxy-D-manno-octulosonate from 3-deoxy-D-manno-octulosonate and CTP: step 1/1. It participates in bacterial outer membrane biogenesis; lipopolysaccharide biosynthesis. In terms of biological role, activates KDO (a required 8-carbon sugar) for incorporation into bacterial lipopolysaccharide in Gram-negative bacteria. The protein is 3-deoxy-manno-octulosonate cytidylyltransferase of Serratia proteamaculans (strain 568).